Reading from the N-terminus, the 565-residue chain is Thiol:disulfide interchange protein DsbD (565 aa).

The signal sequence occupies residues 1–19 (MAQRIFTLILLLCSTSVFA). 2 cysteine pairs are disulfide-bonded: Cys122/Cys128 and Cys182/Cys304. Helical transmembrane passes span 163-183 (LPFS…TPCV), 208-228 (LLTF…GLVV), 243-263 (YVLI…FGLF), 289-309 (GVFI…TAPL), 323-343 (WLGG…LMLI), 357-377 (WMEQ…VFLL), and 384-404 (IWGL…AFIT). Residues 434–565 (WAFGETHTAQ…FSAHLRDRQP (132 aa)) form the Thioredoxin domain. An intrachain disulfide couples Cys480 to Cys483.

It belongs to the thioredoxin family. DsbD subfamily.

It is found in the cell inner membrane. The enzyme catalyses [protein]-dithiol + NAD(+) = [protein]-disulfide + NADH + H(+). It catalyses the reaction [protein]-dithiol + NADP(+) = [protein]-disulfide + NADPH + H(+). In terms of biological role, required to facilitate the formation of correct disulfide bonds in some periplasmic proteins and for the assembly of the periplasmic c-type cytochromes. Acts by transferring electrons from cytoplasmic thioredoxin to the periplasm. This transfer involves a cascade of disulfide bond formation and reduction steps. This is Thiol:disulfide interchange protein DsbD from Escherichia coli O6:K15:H31 (strain 536 / UPEC).